The primary structure comprises 125 residues: Cardioactive peptide (125 aa).

An N-terminal signal peptide occupies residues 1–22 (MTVSRVCLLLLVALVYLDCCYA). A propeptide spanning residues 23 to 42 (ASIPRNFDPRLSEEIVMAPK) is cleaved from the precursor. Cys-47 and Cys-53 form a disulfide bridge. Residue Cys-53 is modified to Cysteine amide. A propeptide spanning residues 57–125 (RSQGPPGMPA…RRKQKEAYIQ (69 aa)) is cleaved from the precursor.

Abdominal perivisceral organ; major neurohemal release site. Expressed in 116 neurons in post-embryonic central nervous system. Nine pairs of cells are observed in the brain, 4.5 pairs in the subesophageal ganglion, three pairs in each thoracic ganglion (T1-T3), three pairs in the first abdominal ganglion (A1), five pairs each in the second to sixth abdominal ganglia (A2-A6) and 7.5 pairs in the terminal ganglion. Expressed in every ganglion in each post-embryonic stage, except in the thoracic ganglia of first- and second-instar larvae. Colocalizes with CAP2b in median neurosecretory cells during the last larval instar through to adults.

The protein localises to the secreted. Its function is as follows. Cardioregulatory neurohormone that increases heart beat rate during adult wing inflation; has no effect on beat amplitude. The effect of CCAP is both ino- and chronotropic. The chain is Cardioactive peptide from Manduca sexta (Tobacco hawkmoth).